The following is a 957-amino-acid chain: MTQTLSQLENRDAFIERHIGPDAQQQQEMLKTVGADSLNALIGQIVPQDIQLATPPQVGDATTEFAALAELKAIAGRNKRFKSYIGMGYTAVQLPPVIQRNMLENPGWYTAYTPYQPEVSQGRLESLLNFQQVTLDLTGLDIASASLLDEATAAAEAMAMAKRVSKLKNANRFFVAADVHPQTLDVVRTRAETFGFDVIVDDADKVLDHQDVFGVLLQQVGTTGEIHDYSKLIAELKARKVIVSVAADFMALVLLTAPGKQGADIVFGSAQRFGVPMGYGGPHAAFFAAKDEFKRSMPGRIIGVSKDAAGNTALRMAMQTREQHIRREKANSNICTSQVLLANIASLYAVFHGPAGLKRIAGRIHRLTDILADGLQKKGLKLRHAHYFDTLCVEVADKAAVLARAEALQINLRSDIHGAVGITLDEATTREDVLNLFRAIVGDDHGLDIDTLDKDVALDSRSIPAAMLRDDAILTHPVFNRYHSETEMMRYMHALERKDLALNQAMIPLGSCTMKLNAAAEMIPITWPEFAELHPFCPVEQAEGYHQMIAQLSDWLVKLTGYDAVCMQPNSGAQGEYAGLLAIRHYHESRNEGHRDICLIPSSAHGTNPASAQMAGMQVVVVACDKNGNIDLADLREKAEQAGANLSCIMVTYPSTHGVYEETIREVCEIVHQFGGQVYLDGANMNAQVGITSPGFIGADVSHLNLHKTFCIPHGGGGPGMGPIGVKAHLAPFVPGHSVVQIEGMLTRQGAVSAAPFGSASILPISWMYIRMMGAEGLKQASQNAILNANYIATRLKEAYPVLYTGRDGRVAHECILDIRPLKEETGISELDIAKRLIDFGFHAPTMSFPVAGTLMVEPTESESKVELDRFIDAMLAIRAEIDRVKAGEWPLEDNPLVNAPHTQGELVSEWNHPYSRELAVFPAGLHNKYWPTVKRLDDVYGDRNLFCSCVPMSEYQ.

The residue at position 708 (Lys708) is an N6-(pyridoxal phosphate)lysine.

This sequence belongs to the GcvP family. The glycine cleavage system is composed of four proteins: P, T, L and H. It depends on pyridoxal 5'-phosphate as a cofactor.

The enzyme catalyses N(6)-[(R)-lipoyl]-L-lysyl-[glycine-cleavage complex H protein] + glycine + H(+) = N(6)-[(R)-S(8)-aminomethyldihydrolipoyl]-L-lysyl-[glycine-cleavage complex H protein] + CO2. Functionally, the glycine cleavage system catalyzes the degradation of glycine. The P protein binds the alpha-amino group of glycine through its pyridoxal phosphate cofactor; CO(2) is released and the remaining methylamine moiety is then transferred to the lipoamide cofactor of the H protein. The sequence is that of Glycine dehydrogenase (decarboxylating) from Klebsiella pneumoniae (strain 342).